The chain runs to 671 residues: Probable ATP-dependent RNA helicase ddx41 (671 aa).

Coiled-coil stretches lie at residues 19–43 and 100–154; these read IPLK…QPQQ and LDQK…DMEE. Low complexity-rich tracts occupy residues 33-83 and 125-139; these read LNNL…NNDN and IEND…NNNG. 2 disordered regions span residues 33 to 88 and 125 to 148; these read LNNL…FEDE and IEND…KEEK. Residues 222 to 250 carry the Q motif motif; sequence TTFKEMKIPKPVIDVLLEKGIKKPSPIQV. One can recognise a Helicase ATP-binding domain in the interval 253-438; it reads LPVILSGRDM…RSALVLPVEV (186 aa). 266–273 is a binding site for ATP; sequence AYTGSGKT. A DEAD box motif is present at residues 386–389; that stretch reads DEAD. A Helicase C-terminal domain is found at 449–609; that stretch reads NVTQEVEFVK…KVPPALLEIP (161 aa). The disordered stretch occupies residues 617–636; that stretch reads KLQDRNGNTGGGADDDDTKP. A CCHC-type zinc finger spans residues 635–652; it reads KPCEYCDGRGHRLVNCPK.

Belongs to the DEAD box helicase family. DDX41 subfamily.

It is found in the nucleus. The catalysed reaction is ATP + H2O = ADP + phosphate + H(+). This Dictyostelium discoideum (Social amoeba) protein is Probable ATP-dependent RNA helicase ddx41 (ddx41).